The sequence spans 293 residues: Homoserine kinase (293 aa).

Residue 83 to 93 (RPKSGLGSSGA) participates in ATP binding.

Belongs to the GHMP kinase family. Homoserine kinase subfamily.

It is found in the cytoplasm. It catalyses the reaction L-homoserine + ATP = O-phospho-L-homoserine + ADP + H(+). It participates in amino-acid biosynthesis; L-threonine biosynthesis; L-threonine from L-aspartate: step 4/5. Catalyzes the ATP-dependent phosphorylation of L-homoserine to L-homoserine phosphate. The polypeptide is Homoserine kinase (Pyrococcus horikoshii (strain ATCC 700860 / DSM 12428 / JCM 9974 / NBRC 100139 / OT-3)).